The chain runs to 225 residues: Probable GTP-binding protein EngB (225 aa).

The 174-residue stretch at 31-204 (VGVEIAFAGR…LGILDSWCKP (174 aa)) folds into the EngB-type G domain. Residues 39–46 (GRSNAGKS), 65–69 (GRTQL), 83–86 (DLPG), 150–153 (TKAD), and 183–185 (FSS) each bind GTP. Mg(2+) contacts are provided by Ser46 and Thr67.

This sequence belongs to the TRAFAC class TrmE-Era-EngA-EngB-Septin-like GTPase superfamily. EngB GTPase family. The cofactor is Mg(2+).

Its function is as follows. Necessary for normal cell division and for the maintenance of normal septation. This Shewanella pealeana (strain ATCC 700345 / ANG-SQ1) protein is Probable GTP-binding protein EngB.